A 430-amino-acid chain; its full sequence is Trigger factor (430 aa).

The PPIase FKBP-type domain occupies 163 to 248 (GNIAIIDFKG…IKDIKVKELP (86 aa)).

The protein belongs to the FKBP-type PPIase family. Tig subfamily.

The protein localises to the cytoplasm. It carries out the reaction [protein]-peptidylproline (omega=180) = [protein]-peptidylproline (omega=0). In terms of biological role, involved in protein export. Acts as a chaperone by maintaining the newly synthesized protein in an open conformation. Functions as a peptidyl-prolyl cis-trans isomerase. This chain is Trigger factor, found in Clostridium botulinum (strain ATCC 19397 / Type A).